The sequence spans 740 residues: MARPRHLRGLGMCITAVLASFIAGFTVGWFIKPLKETTTSAGYHQSIQQKLLSEMKAENIRSFLRSFTKLPHLAGTEQNLLLAKKIQTQWKKFGLDSANLVHYDVLLSYPNETNANYVSIVDEHGVEIFKTSYLEPPPDGYENVTNIIPPYNAFSASGMPEGELVYVNYARTEDFFKLEREMNINCTGKIVIARYGKIFRGNKVKNAMLAGAMGIILYSDPADYFAPDVQPYPKGWNLPGAAAQRGNVLNLNGAGDPLTPGYPAKEYTFRLPVEEAVGIPNIPVHPIGYNDAERLLRNLGGAAPPDKSWKGSLNVSYNIGPGFTGSEYSRNIRMHVNNINKITRIYNVIGTIRGSTEPDRYVILGGHRDSWVFGGIDPTTGTAVLQEIARSFGKLVNGGWRPRRTIIFASWDAEEFGLLGSTEWAEENAKLLQERSIAYINSDSAIEGNYTLRVDCTPLLNQLVYKVAREISSPDDGFESKSLYESWLEKDPSPENKECPRINKLGSGSDFEAYFQRLGIASGRARYTKNKKTDKYSSYPVYHTIYETFELVQNFYDPTFKKQLSVAQLRGALVYELADSVVIPFNIQDYAKALKNYAASIFNISKKHDQQLRNHAVSFDPLFSAVKNFSEAASDFHRRLTQVDLNNPIAVRIMNDQQMLLERAFIDPLGLPGRKFYRHIIFAPSSHNKYAGESFPGIYDAMFDIENKADPSLAWAEVKKHISIAAFTIQAAAGTLTNVL.

Topologically, residues 1 to 7 are cytoplasmic; it reads MARPRHL. The helical; Signal-anchor for type II membrane protein transmembrane segment at 8–31 threads the bilayer; that stretch reads RGLGMCITAVLASFIAGFTVGWFI. Over 32 to 740 the chain is Extracellular; sequence KPLKETTTSA…AAAGTLTNVL (709 aa). N-linked (GlcNAc...) asparagine glycosylation is found at Asn111, Asn143, and Asn185. Substrate contacts are provided by Arg200 and Asn247. Ca(2+)-binding residues include Thr259 and Tyr262. The NAALADase stretch occupies residues 264-577; sequence AKEYTFRLPV…QLRGALVYEL (314 aa). Asn314 is a glycosylation site (N-linked (GlcNAc...) asparagine). His367 and Asp377 together coordinate Zn(2+). Residue Glu414 coordinates substrate. Catalysis depends on Glu414, which acts as the Nucleophile; for NAALADase activity. Zn(2+) is bound at residue Glu415. 2 residues coordinate Ca(2+): Glu423 and Glu426. Residue Asp443 coordinates Zn(2+). Asn449 is a glycosylation site (N-linked (GlcNAc...) asparagine). Residues 507 to 508, 524 to 526, Tyr542, and 542 to 543 contribute to the substrate site; these read SG, RAR, and YH. His543 is a binding site for Zn(2+). An N-linked (GlcNAc...) asparagine glycan is attached at Asn603. Catalysis depends on Ser618, which acts as the Charge relay system. The N-linked (GlcNAc...) asparagine glycan is linked to Asn628. Catalysis depends on charge relay system residues Asp656 and His679. 689 to 690 contributes to the substrate binding site; the sequence is KY.

Belongs to the peptidase M28 family. M28B subfamily. As to quaternary structure, homodimer. The cofactor is Zn(2+). Expressed ovary, testes and lung, but not brain.

It localises to the cell membrane. It catalyses the reaction Release of an unsubstituted, C-terminal glutamyl residue, typically from Ac-Asp-Glu or folylpoly-gamma-glutamates.. Its function is as follows. Has N-acetylated-alpha-linked-acidic dipeptidase (NAALADase) activity. Also exhibits a dipeptidyl-peptidase IV type activity. Inactivates the peptide neurotransmitter N-acetylaspartylglutamate. This chain is N-acetylated-alpha-linked acidic dipeptidase 2 (Naalad2), found in Mus musculus (Mouse).